The chain runs to 347 residues: Phenylalanine--tRNA ligase alpha subunit (347 aa).

Mg(2+) is bound at residue glutamate 265.

This sequence belongs to the class-II aminoacyl-tRNA synthetase family. Phe-tRNA synthetase alpha subunit type 1 subfamily. As to quaternary structure, tetramer of two alpha and two beta subunits. Requires Mg(2+) as cofactor.

The protein localises to the cytoplasm. It catalyses the reaction tRNA(Phe) + L-phenylalanine + ATP = L-phenylalanyl-tRNA(Phe) + AMP + diphosphate + H(+). The chain is Phenylalanine--tRNA ligase alpha subunit from Wolbachia pipientis wMel.